Reading from the N-terminus, the 456-residue chain is Dothistromin biosynthesis regulatory protein aflJ (456 aa).

In terms of domain architecture, HTH iclR-type spans 74–143; the sequence is LARENQLLAC…PKPGYVAHSG (70 aa). The H-T-H motif DNA-binding region spans 104–123; that stretch reads YSDVADLACVPVDQLRRIAR. Polar residues predominate over residues 290 to 300; the sequence is KLHNGLSTPPE. Residues 290–314 are disordered; the sequence is KLHNGLSTPPESDTGPAARAAKASE.

It localises to the nucleus. Its function is as follows. Transcription coactivator involved in regulation of the dothistromin biosynthesis gene cluster with aflR. The protein is Dothistromin biosynthesis regulatory protein aflJ of Dothistroma septosporum (strain NZE10 / CBS 128990) (Red band needle blight fungus).